We begin with the raw amino-acid sequence, 495 residues long: Cytochrome P450 monooxygenase BOA4 (495 aa).

The chain crosses the membrane as a helical span at residues 12–31 (LANSNTVIAGCIVFALYYLF). An N-linked (GlcNAc...) asparagine glycan is attached at N115. C439 lines the heme pocket.

This sequence belongs to the cytochrome P450 family. Requires heme as cofactor.

Its subcellular location is the membrane. It participates in polyketide biosynthesis. Cytochrome P450 monooxygenase; part of the gene cluster A that mediates the biosynthesis of botcinic acid and its botcinin derivatives, acetate-derived polyketides that contribute to virulence when combined with the sesquiterpene botrydial. Botcinic acid and its derivatives have been shown to induce chlorosis and necrosis during host plant infection, but also have antifungal activities. Two polyketide synthases, BOA6 and BOA9, are involved in the biosynthesis of botcinins. BOA6 mediates the formation of the per-methylated tetraketide core by condensation of four units of malonyl-CoA with one unit of acetyl-CoA, which would be methylated in activated methylene groups to yield a bicyclic acid intermediate that could then either be converted to botrylactone derivatives or lose the starter acetate unit through a retro-Claisen type C-C bond cleavage to yield botcinin derivatives. The second polyketide synthase, BOA9, is probably required for the biosynthesis of the tetraketide side chain of botcinins. The methyltransferase (MT) domain within BOA6 is probably responsible for the incorporation of four methyl groups. The trans-enoyl reductase BOA5 might take over the enoyl reductase function of BOA6 that misses an ER domain. The monooxygenases BOA2, BOA3 and BOA4 might be involved in further hydroxylations at C4, C5 and C8, whereas BOA7, close to BOA9, could potentially be involved in the hydroxylation at C4 in the side chain of botcinins. This is Cytochrome P450 monooxygenase BOA4 from Botryotinia fuckeliana (strain B05.10) (Noble rot fungus).